The primary structure comprises 1407 residues: MKDLLKFLKAQTKTEEFDAIKIALASPDMIRSWSFGEVKKPETINYRTFKPERDGLFCARIFGPVKDYECLCGKYKRLKHRGVICEKCGVEVTQTKVRRERMGHIELASPTAHIWFLKSLPSRIGLLLDMPLRDIERVLYFESYVVIEGGMTNLEKRQILTEEQYLDALEEFGDEFDAKMGAEAIQALLKNMDLEQECETLREELNETNSETKRKKLTKRIKLLEAFVQSGNKPEWMILTVLPVLPPDLRPLVPLDGGRFATSDLNDLYRRVINRNNRLKRLLDLAAPDIIVRNEKRMLQEAVDALLDNGRRGRAITGSNKRPLKSLADMIKGKQGRFRQNLLGKRVDYSGRSVITVGPYLRLHQCGLPKKMALELFKPFIYGKLELRGLATTIKAAKKMVEREESVVWDILDEVIREHPVLLNRAPTLHRLGIQAFEPVLIEGKAIQLHPLVCAAYNADFDGDQMAVHVPLTLEAQLEARALMMSTNNILSPANGEPIIVPSQDVVLGLYYMTRDCVNAKGEGMVLTGPKEAERVYRAGLASLHARVKVRITEHEKNEQDEWVAKTSIIDTTIGRAILWMIVPKGLPYSIVNQALGKKAISKMLNTCYRILGLKPTVIFADQTMYTGFAYAARSGASVGIDDMVIPEKKVEIITEAEAEVAEIQQQFQSGLVTAGERYNKVIDIWAAANERVAKAMMENLSTEVVINRDGVEERQVSFNSIFMMADSGARGSAAQIRQLAGMRGLMAKPDGSIIETPITANFREGLNVLQYFISTHGARKGLADTALKTANSGYLTRRLVDVAQDLVVTEDDCGTHEGIMMTPVIEGGDVKEPLRERVLGRVTAEDVLKPGTADILLPRNTLLHEQQCDLLEEHSVDSLKVRSVVSCETDFGVCAHCYGRDLARGHIINKGEAIGVIAAQSIGEPGTQLTMRTFHIGGAASRAAAESSIQVKNKGTLKLINAKSVTNSAGKLVITSRNVELKMIDEFGRTKESYKVPYGSTMAKGDGEQVAAGETVANWDPHTMPVITEVSGFIRFTDMIDGQTITRQTDDLTGLSSLVILDSAERTAGGKDLRPALKIVDANGNDVMIPGSDMPAQYFLPGKAIVQLEDGIKISSGDTLARVPQESGGTKDITGGLPRVADLFEARRPKEPAILAEISGIISFGKETKGKRRLVITPIDGSDHYEEMIPKWRQLNVFEGERVERGDVVSDGPESPHDILRLRGVHAVTRYITNEVQEVYRLQGVKINDKHIEVIVRQMLRKATIASAGSTDFLDGEQVEFSRVKIANRELEANGKISATFARDLLGITKASLATESFISAASFQETTRVLTEAAVAGKRDELRGLKENVIVGRLIPAGTGYAYHQDRMRRKAAGEAPVVPQVTADEASASLAELLNAGLGGRDDE.

The Zn(2+) site is built by C70, C72, C85, and C88. Positions 460, 462, and 464 each coordinate Mg(2+). Residues C814, C888, C895, and C898 each coordinate Zn(2+).

This sequence belongs to the RNA polymerase beta' chain family. In terms of assembly, the RNAP catalytic core consists of 2 alpha, 1 beta, 1 beta' and 1 omega subunit. When a sigma factor is associated with the core the holoenzyme is formed, which can initiate transcription. Requires Mg(2+) as cofactor. Zn(2+) serves as cofactor.

The enzyme catalyses RNA(n) + a ribonucleoside 5'-triphosphate = RNA(n+1) + diphosphate. DNA-dependent RNA polymerase catalyzes the transcription of DNA into RNA using the four ribonucleoside triphosphates as substrates. This chain is DNA-directed RNA polymerase subunit beta', found in Erwinia tasmaniensis (strain DSM 17950 / CFBP 7177 / CIP 109463 / NCPPB 4357 / Et1/99).